A 272-amino-acid polypeptide reads, in one-letter code: Cell division protein FtsQ (272 aa).

The Cytoplasmic portion of the chain corresponds to Met1–Arg43. The helical transmembrane segment at Ile44–Ser64 threads the bilayer. The Extracellular portion of the chain corresponds to Arg65–Ser272. The region spanning Phe66–Arg133 is the POTRA domain.

This sequence belongs to the FtsQ/DivIB family. FtsQ subfamily.

The protein localises to the cell membrane. Functionally, essential cell division protein. The chain is Cell division protein FtsQ from Chloroflexus aurantiacus (strain ATCC 29366 / DSM 635 / J-10-fl).